The sequence spans 89 residues: Cell division protein FtsL (89 aa).

The Cytoplasmic portion of the chain corresponds to 1–22; sequence MIDRKHYHLVGSIGKDILNNGK. Residues 23–40 traverse the membrane as a helical segment; sequence LPALLLIAVLASSSLVVI. Residues 41–89 lie on the Periplasmic side of the membrane; it reads TTYQTRRLTVEREQLLLEQNILDIEWRNLILEDNVISDQSRFEFVATEQ.

It belongs to the FtsL family. In terms of assembly, part of a complex composed of FtsB, FtsL and FtsQ.

The protein localises to the cell inner membrane. In terms of biological role, essential cell division protein. May link together the upstream cell division proteins, which are predominantly cytoplasmic, with the downstream cell division proteins, which are predominantly periplasmic. The sequence is that of Cell division protein FtsL from Moranella endobia (strain PCIT).